A 345-amino-acid polypeptide reads, in one-letter code: Acetylserotonin O-methyltransferase (345 aa).

Residues Y147, W164, D210, 235–237 (GDF), and R252 contribute to the S-adenosyl-L-methionine site. Residue H255 is the Proton donor/acceptor of the active site. Residues D256, N302, and Q306 each contribute to the substrate site.

It belongs to the class I-like SAM-binding methyltransferase superfamily. Cation-independent O-methyltransferase family. Homodimer. In terms of tissue distribution, expressed in the pineal gland (at protein level). In the retina, very low expression is found at the mRNA level, and not at the protein level.

The enzyme catalyses N-acetylserotonin + S-adenosyl-L-methionine = melatonin + S-adenosyl-L-homocysteine + H(+). Its pathway is aromatic compound metabolism; melatonin biosynthesis; melatonin from serotonin: step 1/2. Catalyzes the transfer of a methyl group onto N-acetylserotonin, producing melatonin (N-acetyl-5-methoxytryptamine). Functionally, does not show Acetylserotonin O-methyltransferase activity. This Homo sapiens (Human) protein is Acetylserotonin O-methyltransferase (ASMT).